The primary structure comprises 29 residues: Cytochrome b6-f complex subunit 8 (29 aa).

A helical transmembrane segment spans residues 3 to 23 (ILTLGWVSLLVVFTWSIAMVV).

It belongs to the PetN family. The 4 large subunits of the cytochrome b6-f complex are cytochrome b6, subunit IV (17 kDa polypeptide, PetD), cytochrome f and the Rieske protein, while the 4 small subunits are PetG, PetL, PetM and PetN. The complex functions as a dimer.

It localises to the cellular thylakoid membrane. In terms of biological role, component of the cytochrome b6-f complex, which mediates electron transfer between photosystem II (PSII) and photosystem I (PSI), cyclic electron flow around PSI, and state transitions. In Nostoc punctiforme (strain ATCC 29133 / PCC 73102), this protein is Cytochrome b6-f complex subunit 8.